Consider the following 368-residue polypeptide: Epoxyqueuosine reductase QueH (368 aa).

The [4Fe-4S] cluster site is built by cysteine 6, cysteine 7, cysteine 87, and cysteine 90. Cysteine 174 and cysteine 176 are joined by a disulfide.

The protein belongs to the QueH family.

It catalyses the reaction epoxyqueuosine(34) in tRNA + AH2 = queuosine(34) in tRNA + A + H2O. Its pathway is tRNA modification; tRNA-queuosine biosynthesis. Its function is as follows. Catalyzes the conversion of epoxyqueuosine (oQ) to queuosine (Q), which is a hypermodified base found in the wobble positions of tRNA(Asp), tRNA(Asn), tRNA(His) and tRNA(Tyr). The polypeptide is Epoxyqueuosine reductase QueH (Helicobacter pylori (strain ATCC 700392 / 26695) (Campylobacter pylori)).